The primary structure comprises 432 residues: 23S rRNA (uracil(1939)-C(5))-methyltransferase RlmD (432 aa).

One can recognise a TRAM domain in the interval 1 to 53; it reads MPIGKIESLDHEARGITRQEGKAIFVDGALPGETVEYASFRRKSKFELAHLVH. The [4Fe-4S] cluster site is built by Cys66, Cys72, Cys75, and Cys154. Positions 263, 292, 297, 313, 341, and 362 each coordinate S-adenosyl-L-methionine. The active-site Nucleophile is the Cys388.

It belongs to the class I-like SAM-binding methyltransferase superfamily. RNA M5U methyltransferase family. RlmD subfamily.

It catalyses the reaction uridine(1939) in 23S rRNA + S-adenosyl-L-methionine = 5-methyluridine(1939) in 23S rRNA + S-adenosyl-L-homocysteine + H(+). Functionally, catalyzes the formation of 5-methyl-uridine at position 1939 (m5U1939) in 23S rRNA. The sequence is that of 23S rRNA (uracil(1939)-C(5))-methyltransferase RlmD from Dechloromonas aromatica (strain RCB).